The chain runs to 1002 residues: Transposase for transposon gamma-delta (1002 aa).

It belongs to the transposase 7 family.

Functionally, required for transposition of transposon Tn1000. The sequence is that of Transposase for transposon gamma-delta (tnpA) from Escherichia coli (strain K12).